We begin with the raw amino-acid sequence, 98 residues long: Putative pterin-4-alpha-carbinolamine dehydratase (98 aa).

The protein belongs to the pterin-4-alpha-carbinolamine dehydratase family.

It catalyses the reaction (4aS,6R)-4a-hydroxy-L-erythro-5,6,7,8-tetrahydrobiopterin = (6R)-L-erythro-6,7-dihydrobiopterin + H2O. This is Putative pterin-4-alpha-carbinolamine dehydratase from Mesorhizobium japonicum (strain LMG 29417 / CECT 9101 / MAFF 303099) (Mesorhizobium loti (strain MAFF 303099)).